Here is a 244-residue protein sequence, read N- to C-terminus: MSKLDLNALNELPKVDRILALAETNAELEKLDAEGRVAWALDNLPGEYVLSSSFGIQAAVSLHLVNQIHPDIPVILTDTGYLFPETYRFIDELTDKLKLNLKVYRATESAAWQEARYGKLWEQGVEGIEKYNDINKVEPMNRALKELNAQTWFAGLRREQSGSRANLPVLAIQRGVFKVLPIIDWDNRTIYQYLQKHGLKYHPLWDDGYLSVGDTHTTRKWEPGMAEEETRFFGLKRECGLHEG.

Catalysis depends on Cys239, which acts as the Nucleophile; cysteine thiosulfonate intermediate.

It belongs to the PAPS reductase family. CysH subfamily.

It is found in the cytoplasm. The catalysed reaction is [thioredoxin]-disulfide + sulfite + adenosine 3',5'-bisphosphate + 2 H(+) = [thioredoxin]-dithiol + 3'-phosphoadenylyl sulfate. It participates in sulfur metabolism; hydrogen sulfide biosynthesis; sulfite from sulfate: step 3/3. Its function is as follows. Catalyzes the formation of sulfite from phosphoadenosine 5'-phosphosulfate (PAPS) using thioredoxin as an electron donor. This is Phosphoadenosine 5'-phosphosulfate reductase from Shigella flexneri serotype 5b (strain 8401).